A 501-amino-acid polypeptide reads, in one-letter code: Cryptochrome-1 (501 aa).

A Photolyase/cryptochrome alpha/beta domain is found at 5–134 (KKTIVWFRRD…SVQSYNGDLC (130 aa)). Residues tyrosine 231 and 243–247 (TSLLS) contribute to the FAD site. Arginine 356 contacts ATP. Aspartate 386 and aspartate 388 together coordinate FAD. Aspartate 405 is a binding site for ATP.

It belongs to the DNA photolyase class-1 family. In terms of assembly, homodimer. The cofactor is FAD. (6R)-5,10-methylene-5,6,7,8-tetrahydrofolate serves as cofactor.

Functionally, mediates blue light-induced gene expression in addition to its role in blue light-dependent inhibition of stem growth. The protein is Cryptochrome-1 (PHR1) of Sinapis alba (White mustard).